A 473-amino-acid polypeptide reads, in one-letter code: Sucrose-6-phosphate hydrolase (473 aa).

Substrate contacts are provided by residues 44–47, Gln-63, 106–107, 167–168, and Glu-224; these read LLND, YS, and RD. Asp-47 is an active-site residue.

It belongs to the glycosyl hydrolase 32 family.

The protein resides in the cytoplasm. The catalysed reaction is Hydrolysis of terminal non-reducing beta-D-fructofuranoside residues in beta-D-fructofuranosides.. The protein operates within glycan biosynthesis; sucrose metabolism. The polypeptide is Sucrose-6-phosphate hydrolase (scrB) (Lactococcus lactis subsp. lactis (Streptococcus lactis)).